We begin with the raw amino-acid sequence, 840 residues long: MDPALSAVRLTVQEAIHILSSSEDAGHILSTLGTLKRYLGGTEDPVLPEEKEEFATVHFSAVLRCLVSKLSPGWLELSPGGQLERLWESFFLDGPPDQAFLVLMEAIESTAGPSFRLMKMAQLLDTFLSTGRVAALMEEQCRPQTKPSFPLFQETLLSKVVGLPDLLGNCLQRDNLTQFFPQNYFPLLGQEVVQALKAVVNFLQDGLDCSVSFVSRVLGKVCIQGRKREILSVLVPQLTVLTQDSCLWQRVCWRLVEQVPDRAVEAVLTGLVEAAPRPEVLSRLLGNLVVKNKKARFVVTRKLLLLQYQHTTPMVQSLLGYLALDSQRRPLLIQVLKELLETWGCSSAVRHTPLEQQCYISKAILVCLAHLGEPELQDIRDELLASMMAGVKCRLDSSLPPVRRLGMIVAEVISSRIHPEGPLLKFQYEDDEMSRELLALATPEPAGDCSSVSRGPSPAPVDTESPVEMPEKAVESDVPPTQPQGSDSELDSDDEFIPYDMSGDRELKSSKEPLYIRDCVEALTTSEDMERWEASLKGLEGLVYRSPTATREVSVELAKVLLHLEEKTCVAEFEQLRQSALVAVTVTDPEQVAKYLTSQFYGLNYSLRQRMDILDVLVLAAQALSRPKSLQRRSQHGPPVPGTMCSPALAVSQTGNVAAPDWQVVVEERIRSKTRRFSKGCPQRELSGVPNEFSSVAGYFFFPLLQHFDRPLVTFDLLGDDQLVLGRLTHTLASLMYLAVNTTVAVPMGKALLEFVWALRFHVDIYVRRGLLSAVSSVLLSVPTERLLGDLPDELLEARSWLADVAEKDVDEDCRELAVRALLLLERLKDKLLSSSSPQP.

Methionine 1 carries the post-translational modification N-acetylmethionine. 3 positions are modified to hydroxyproline: proline 374, proline 419, and proline 422. The interval proline 443 to isoleucine 497 is disordered. Serine 457 bears the Phosphoserine mark. At serine 486 the chain carries Phosphoserine; by CK2. A phosphoserine mark is found at serine 488, serine 492, and serine 837. Residues serine 488–isoleucine 497 are compositionally biased toward acidic residues.

Belongs to the TEL2 family. Component of the TTT complex composed of TELO2, TTI1 and TTI2. Interacts with ATM, ATR, MTOR, PRKDC, RUVBL2, TTI1, TTI2, SMG1 and TRRAP. Component of the mTORC1 and mTORC2 complexes. Interacts (phosphorylated form) with PIH1D1. Interaction with PIH1D1 mediates interaction of TELO2 with the R2TP complex composed of RUVBL1, RUVBL2, PIH1D1, and RPAP3. In terms of processing, hydroxylation by PHD3 is required for a proper interaction with ATR, and activation of the ATR/CHK1/p53 pathway following DNA damage. Phosphorylated at Ser-486 by CK2 following growth factor deprivation, leading to its subsequent ubiquitination by the SCF(FBXO9) complex. Phosphorylation by CK2 only takes place when TELO2 is bound to mTORC1, not mTORC2; leading to selective ubiquitination of mTORC1-associated protein. Post-translationally, ubiquitinated by the SCF(FBXO9) complex following phosphorylation by CK2 in response to growth factor deprivation, leading to its degradation by the proteasome. Only mTORC1-associated protein is ubiquitinated and degraded, leading to selective inactivation of mTORC1 to restrain cell growth and protein translation, while mTORC2 is activated due to the relief of feedback inhibition by mTORC1.

Its subcellular location is the cytoplasm. It is found in the membrane. The protein resides in the nucleus. It localises to the chromosome. The protein localises to the telomere. Regulator of the DNA damage response (DDR). Part of the TTT complex that is required to stabilize protein levels of the phosphatidylinositol 3-kinase-related protein kinase (PIKK) family proteins. The TTT complex is involved in the cellular resistance to DNA damage stresses, like ionizing radiation (IR), ultraviolet (UV) and mitomycin C (MMC). Together with the TTT complex and HSP90 may participate in the proper folding of newly synthesized PIKKs. Promotes assembly, stabilizes and maintains the activity of mTORC1 and mTORC2 complexes, which regulate cell growth and survival in response to nutrient and hormonal signals. May be involved in telomere length regulation. The chain is Telomere length regulation protein TEL2 homolog (Telo2) from Mus musculus (Mouse).